Reading from the N-terminus, the 268-residue chain is Undecaprenyl-diphosphatase (268 aa).

The next 7 membrane-spanning stretches (helical) occupy residues 47 to 67 (FTVL…FAKL), 83 to 103 (FVIG…IAGK), 109 to 129 (LFNP…LMWV), 144 to 164 (FPLP…IPGV), 184 to 204 (AAEF…AYDF), 218 to 238 (TVAI…KAFL), and 246 to 266 (FTFF…ALAL).

Belongs to the UppP family.

It localises to the cell inner membrane. The enzyme catalyses di-trans,octa-cis-undecaprenyl diphosphate + H2O = di-trans,octa-cis-undecaprenyl phosphate + phosphate + H(+). Its function is as follows. Catalyzes the dephosphorylation of undecaprenyl diphosphate (UPP). Confers resistance to bacitracin. This is Undecaprenyl-diphosphatase from Nitrobacter winogradskyi (strain ATCC 25391 / DSM 10237 / CIP 104748 / NCIMB 11846 / Nb-255).